Consider the following 349-residue polypeptide: L-lactate dehydrogenase (349 aa).

The segment at 199–219 is disordered; that stretch reads APEGSIIGADGNPTTDASTMF.

This sequence belongs to the LDH2/MDH2 oxidoreductase family.

The protein resides in the cytoplasm. The catalysed reaction is (S)-lactate + NAD(+) = pyruvate + NADH + H(+). The protein operates within fermentation; pyruvate fermentation to lactate; (S)-lactate from pyruvate: step 1/1. This is L-lactate dehydrogenase (ldh) from Cupriavidus necator (strain ATCC 17699 / DSM 428 / KCTC 22496 / NCIMB 10442 / H16 / Stanier 337) (Ralstonia eutropha).